The chain runs to 190 residues: Shikimate kinase (190 aa).

ATP is bound at residue 19–24 (GSGKTT). T23 is a binding site for Mg(2+). 3 residues coordinate substrate: D41, R65, and G87. R124 serves as a coordination point for ATP. Residue R143 participates in substrate binding.

Belongs to the shikimate kinase family. As to quaternary structure, monomer. Mg(2+) serves as cofactor.

Its subcellular location is the cytoplasm. It catalyses the reaction shikimate + ATP = 3-phosphoshikimate + ADP + H(+). The protein operates within metabolic intermediate biosynthesis; chorismate biosynthesis; chorismate from D-erythrose 4-phosphate and phosphoenolpyruvate: step 5/7. Its function is as follows. Catalyzes the specific phosphorylation of the 3-hydroxyl group of shikimic acid using ATP as a cosubstrate. The polypeptide is Shikimate kinase (Synechococcus sp. (strain ATCC 27144 / PCC 6301 / SAUG 1402/1) (Anacystis nidulans)).